Here is a 367-residue protein sequence, read N- to C-terminus: Peroxisome biogenesis protein 16 (367 aa).

Residues 135–173 are disordered; it reads GGETPNEEKDSNQSESQNRAGNSGRNLGPHGLGNQNHHN. Residues 147 to 159 are compositionally biased toward polar residues; that stretch reads QSESQNRAGNSGR. 2 consecutive transmembrane segments (helical) span residues 237–257 and 264–284; these read ALFA…VLFI and SWIP…LLAN.

The protein belongs to the peroxin-16 family. As to quaternary structure, interacts with APEM9 (via both N- and C-terminus). In terms of processing, the detection of an additional immunorelated polypeptide of 52 kDa suggests a post-translational modification of PEX16. Expressed in roots, siliques, seeds, cotyledons, leaves and flowers. Low expression in leaves and roots.

It is found in the peroxisome membrane. The protein resides in the endoplasmic reticulum membrane. Functionally, involved in the formation of peroxisomes, lipid bodies and protein bodies. This is Peroxisome biogenesis protein 16 from Arabidopsis thaliana (Mouse-ear cress).